The chain runs to 398 residues: Calreticulin (398 aa).

An N-terminal signal peptide occupies residues 1-19 (MKAVVLVVVSLLALSSINC). The N-domain stretch occupies residues 20–197 (DVFFEEKFPD…NEKVESGDLE (178 aa)). C105 and C137 form a disulfide bridge. Y109, K111, Y128, and D135 together coordinate an alpha-D-glucoside. Repeat copies occupy residues 191-202 (VESGDLEADWDF), 210-221 (DPEAKKPEDWDD), 227-238 (DPEDKKPEDWDK), 244-255 (DPDATKPEDWDD), 259-269 (GEWEPPMIDNP), 273-283 (GVWAPKQIDNP), and 287-297 (GPWVHPEIDNP). Residues 191 to 255 (VESGDLEADW…DATKPEDWDD (65 aa)) form a 4 X approximate repeats region. Residues 198-308 (ADWDFLPNKK…YTPDSNLYKR (111 aa)) form a P-domain region. Residues 207–251 (KIKDPEAKKPEDWDDKPTIPDPEDKKPEDWDKPEHIPDPDATKPE) are compositionally biased toward basic and acidic residues. The segment at 207–257 (KIKDPEAKKPEDWDDKPTIPDPEDKKPEDWDKPEHIPDPDATKPEDWDDEM) is disordered. The segment at 259–297 (GEWEPPMIDNPDYKGVWAPKQIDNPAYKGPWVHPEIDNP) is 3 X approximate repeats. The segment at 309-398 (DEICAVGLDL…AAPVEEHDEL (90 aa)) is C-domain. D317 lines the an alpha-D-glucoside pocket. The disordered stretch occupies residues 334–398 (DDPAAAKERG…AAPVEEHDEL (65 aa)). Residues 337–372 (AAAKERGEVIKKRQEGEKKMKSEQDEAEREKEKAEK) are compositionally biased toward basic and acidic residues. Acidic residues predominate over residues 373–387 (PDDEEDDEDLDDETG). The Prevents secretion from ER motif lies at 395–398 (HDEL).

Belongs to the calreticulin family. Monomer. Expressed in fat bodies. Not expressed in midgut, silk gland, ovary or testis.

It localises to the endoplasmic reticulum lumen. Molecular calcium-binding chaperone promoting folding, oligomeric assembly and quality control in the ER via the calreticulin/calnexin cycle. This lectin may interact transiently with almost all of the monoglucosylated glycoproteins that are synthesized in the ER. The chain is Calreticulin from Bombyx mori (Silk moth).